The following is a 283-amino-acid chain: Undecaprenyl-diphosphatase (283 aa).

6 consecutive transmembrane segments (helical) span residues 47–67 (PGLSVTAVIQLGSIVAVIAYF), 94–114 (LGIAMLIGTLPILIAGLCIKL), 127–147 (VPAIAVVSIVMALLLGFAELL), 197–217 (AARFSFLLGIPAITIAGLVEL), 227–247 (GGVLPVFVGICSAAVVSWLAI), and 261–281 (IFVVYRLLFGVLLLVWWSGSA).

Belongs to the UppP family.

Its subcellular location is the cell inner membrane. The catalysed reaction is di-trans,octa-cis-undecaprenyl diphosphate + H2O = di-trans,octa-cis-undecaprenyl phosphate + phosphate + H(+). Catalyzes the dephosphorylation of undecaprenyl diphosphate (UPP). Confers resistance to bacitracin. The sequence is that of Undecaprenyl-diphosphatase from Synechococcus sp. (strain CC9311).